The primary structure comprises 508 residues: Transcription termination factor MTERF4, chloroplastic (508 aa).

The transit peptide at 1-79 directs the protein to the chloroplast; it reads MMKSLFLFSA…PSLLDMERGR (79 aa). Residues 28–49 show a composition bias toward low complexity; it reads RLTASASTSASSPPRAGCSRGP. Disordered stretches follow at residues 28-69 and 475-508; these read RLTA…LYAR and FDTN…EFIE. A compositionally biased stretch (acidic residues) spans 484–508; that stretch reads VEDEVEDEDLDEDSDYDSTDDEFIE.

This sequence belongs to the mTERF family.

Its subcellular location is the plastid. The protein resides in the chloroplast stroma. Functionally, transcription termination factor required for processing and steady-state levels of plastid transcripts. Required for splicing of the chloroplastic group II intron. Required for the accumulation of 16S and 23S ribosomes. The protein is Transcription termination factor MTERF4, chloroplastic of Oryza sativa subsp. japonica (Rice).